Here is a 245-residue protein sequence, read N- to C-terminus: Rhamnosyl O-methyltransferase (245 aa).

Residues 1-38 (MGLVWRSRTSLVGQLIGLVRLVASFAAQLFYRPSDAVA) form the signal peptide.

It belongs to the rhamnosyl O-methyltransferase family.

Catalyzes the O-methylation of the hydroxyl group located on C-2 of the first rhamnosyl residue linked to the phenolic group of glycosylated phenolphthiocerol dimycocerosates (PGL) and p-hydroxybenzoic acid derivatives (p-HBAD). The protein is Rhamnosyl O-methyltransferase of Mycobacterium bovis (strain ATCC BAA-935 / AF2122/97).